The sequence spans 2371 residues: Reducing polyketide synthase DEP5 (2371 aa).

Positions 47–477 (LEPIAVVGMG…GTNAHTIIES (431 aa)) constitute a Ketosynthase family 3 (KS3) domain. Catalysis depends on for beta-ketoacyl synthase activity residues cysteine 221, histidine 358, and histidine 399. The interval 593–905 (VFTGQGAQWA…QYLPTLIRGS (313 aa)) is malonyl-CoA:ACP transacylase (MAT) domain. The active-site For malonyltransferase activity is the serine 685. Residues 982 to 1120 (HDVLGQLTIG…GSIRINTSNK (139 aa)) form an N-terminal hotdog fold region. Positions 982–1158 (HDVLGQLTIG…FNYGPTFQDM (177 aa)) are dehydratase (DH) domain. The PKS/mFAS DH domain occupies 982-1286 (HDVLGQLTIG…CTAYEAAIPQ (305 aa)). Histidine 1014 acts as the Proton acceptor; for dehydratase activity in catalysis. Positions 1132–1286 (PQRASGKLWN…CTAYEAAIPQ (155 aa)) are C-terminal hotdog fold. The active-site Proton donor; for dehydratase activity is the aspartate 1195. The tract at residues 1656–1964 (GKVEAGKVVF…QSLSSTETVL (309 aa)) is enoyl reductase (ER) domain. The interval 1988–2163 (ATYLLVGCLG…KHACAVVLPM (176 aa)) is ketoreductase (KR) domain. One can recognise a Carrier domain in the interval 2286–2364 (SLVRDHFISK…KFAELVCAAQ (79 aa)). An O-(pantetheine 4'-phosphoryl)serine modification is found at serine 2323.

The protein operates within polyketide biosynthesis. In terms of biological role, part of the gene cluster that mediates the biosynthesis of depudecin, a highly oxidized eleven-carbon linear polyketide that acts as a histone deacetylase (HDAC) inhibitor and makes a small contribution to pathogenesis. The reducing polyketide synthase DEP5 is the central enzyme in depudecin biosynthesis by yielding the backbone polyketide chain. The monooxygenases DEP2 and DEP4, as well as the uncharacterized protein DEP1, then act as tailoring enzymes to modify the intermediate polyketide chain into depudecin. This chain is Reducing polyketide synthase DEP5, found in Fusarium langsethiae.